Consider the following 426-residue polypeptide: Citrate synthase (426 aa).

Residues His-314 and Asp-372 contribute to the active site.

The protein belongs to the citrate synthase family.

The enzyme catalyses oxaloacetate + acetyl-CoA + H2O = citrate + CoA + H(+). It functions in the pathway carbohydrate metabolism; tricarboxylic acid cycle; isocitrate from oxaloacetate: step 1/2. The polypeptide is Citrate synthase (gltA) (Helicobacter pylori (strain J99 / ATCC 700824) (Campylobacter pylori J99)).